Here is a 293-residue protein sequence, read N- to C-terminus: ATP synthase gamma chain (293 aa).

The protein belongs to the ATPase gamma chain family. In terms of assembly, F-type ATPases have 2 components, CF(1) - the catalytic core - and CF(0) - the membrane proton channel. CF(1) has five subunits: alpha(3), beta(3), gamma(1), delta(1), epsilon(1). CF(0) has three main subunits: a, b and c.

The protein localises to the cell inner membrane. Produces ATP from ADP in the presence of a proton gradient across the membrane. The gamma chain is believed to be important in regulating ATPase activity and the flow of protons through the CF(0) complex. This is ATP synthase gamma chain from Gluconacetobacter diazotrophicus (strain ATCC 49037 / DSM 5601 / CCUG 37298 / CIP 103539 / LMG 7603 / PAl5).